Here is a 271-residue protein sequence, read N- to C-terminus: 3-methyl-2-oxobutanoate hydroxymethyltransferase (271 aa).

Residues Asp51 and Asp90 each contribute to the Mg(2+) site. Residues 51 to 52 (DS), Asp90, and Lys118 contribute to the 3-methyl-2-oxobutanoate site. Position 120 (Glu120) interacts with Mg(2+). Glu186 acts as the Proton acceptor in catalysis.

Belongs to the PanB family. In terms of assembly, homodecamer; pentamer of dimers. Mg(2+) serves as cofactor.

The protein localises to the cytoplasm. The catalysed reaction is 3-methyl-2-oxobutanoate + (6R)-5,10-methylene-5,6,7,8-tetrahydrofolate + H2O = 2-dehydropantoate + (6S)-5,6,7,8-tetrahydrofolate. The protein operates within cofactor biosynthesis; (R)-pantothenate biosynthesis; (R)-pantoate from 3-methyl-2-oxobutanoate: step 1/2. In terms of biological role, catalyzes the reversible reaction in which hydroxymethyl group from 5,10-methylenetetrahydrofolate is transferred onto alpha-ketoisovalerate to form ketopantoate. The chain is 3-methyl-2-oxobutanoate hydroxymethyltransferase from Xanthomonas axonopodis pv. citri (strain 306).